Here is a 159-residue protein sequence, read N- to C-terminus: MGIYSFWIFDRHCNCIFDREWTLASNSASGTINSKQNEEDAKLLYGMIFSLRSITQKLSKGSVKNDIRSISTGKYRVHTYCTASGLWFVLLSDFKQQSYTQVLQYIYSHIYVKYVSNNLLSPYDFAENENEMRGQGTRKITNRNFISVLESFLAPMVNQ.

Belongs to the TRAPP small subunits family. BET5 subfamily. As to quaternary structure, part of the multisubunit TRAPP (transport protein particle) I complex composed of BET3, BET5, TRS20, TRS23, TRS31 and TRS33. Part of the multisubunit TRAPP (transport protein particle) II complex composed of BET3, BET5, TRS20, TRS23, TRS31, TRS33, TRS65, TRS85, TRS120 and TRS130. Part of the multisubunit TRAPP (transport protein particle) III complex composed of BET3, BET5, TRS20, TRS23, TRS31, TRS33 and TRS85.

It localises to the golgi apparatus. Its subcellular location is the cis-Golgi network. It is found in the endoplasmic reticulum. The protein resides in the preautophagosomal structure. In terms of biological role, component of the TRAPP I, TRAPP II and TRAPP III complexes which act as guanine nucleotide exchange factors (GEF) for YPT1. TRAPP I plays a key role in the late stages of endoplasmic reticulum to Golgi traffic. TRAPP II plays a role in intra-Golgi transport. TRAPP III plays a role in autophagosome formation. Required for sporulation. Has a role late in meiosis following DNA replication. In Saccharomyces cerevisiae (strain ATCC 204508 / S288c) (Baker's yeast), this protein is Trafficking protein particle complex subunit BET5 (BET5).